The primary structure comprises 95 residues: Small ribosomal subunit protein bS6 (95 aa).

It belongs to the bacterial ribosomal protein bS6 family.

In terms of biological role, binds together with bS18 to 16S ribosomal RNA. This chain is Small ribosomal subunit protein bS6, found in Clostridium novyi (strain NT).